We begin with the raw amino-acid sequence, 282 residues long: Biotin synthase (282 aa).

The 230-residue stretch at 1 to 230 (MSDNKIYLCA…NQMLMIAGGR (230 aa)) folds into the Radical SAM core domain. Positions 19, 23, and 26 each coordinate [4Fe-4S] cluster. Cysteine 63, cysteine 98, and cysteine 156 together coordinate [2Fe-2S] cluster.

Belongs to the radical SAM superfamily. Biotin synthase family. Homodimer. Requires [4Fe-4S] cluster as cofactor. [2Fe-2S] cluster serves as cofactor.

It catalyses the reaction (4R,5S)-dethiobiotin + (sulfur carrier)-SH + 2 reduced [2Fe-2S]-[ferredoxin] + 2 S-adenosyl-L-methionine = (sulfur carrier)-H + biotin + 2 5'-deoxyadenosine + 2 L-methionine + 2 oxidized [2Fe-2S]-[ferredoxin]. Its pathway is cofactor biosynthesis; biotin biosynthesis; biotin from 7,8-diaminononanoate: step 2/2. Functionally, catalyzes the conversion of dethiobiotin (DTB) to biotin by the insertion of a sulfur atom into dethiobiotin via a radical-based mechanism. This chain is Biotin synthase, found in Aliarcobacter butzleri (strain RM4018) (Arcobacter butzleri).